The following is a 131-amino-acid chain: uncharacterized protein (131 aa).

The helical transmembrane segment at Val-17–Leu-39 threads the bilayer.

The protein localises to the membrane. This is an uncharacterized protein from Archaeoglobus fulgidus (strain ATCC 49558 / DSM 4304 / JCM 9628 / NBRC 100126 / VC-16).